Here is a 624-residue protein sequence, read N- to C-terminus: FAD-dependent monooxygenase apdD (624 aa).

FAD contacts are provided by E73 and D359.

Belongs to the paxM FAD-dependent monooxygenase family. FAD serves as cofactor.

It participates in secondary metabolite biosynthesis. In terms of biological role, FAD-dependent monooxygenase; part of the gene cluster that mediates the biosynthesis of aspyridones. The polyketide-amino acid backbone preaspyridone A is first assembled by the PKS-NRPS hybrid apdA. The assembly of preaspyridone A is initiated by loading of malonyl-CoA onto apdA, followed by decarboxylation to yield the acetyl starter unit. The growing polyketide chain then elongates into a tetraketide. The adpA PKS module catalyzes three Claisen condensations, as well as beta-keto processing and methylation. Alpha-methylation step during polyketide synthesis is a prerequisite and a key checkpoint for chain transfer between PKS and NRPS modules. The downstream NRPS module contains the condensation (C), adenylation (A), and thiolation (T) domains and catalyzes the incorporation of tyrosine via the formation of the L-tyrosinyl-thioester and the amide linkage between L-tyrosinyl-thioester and the tetraketide. The bimodular assembly line is terminated with a reductase (R) domain that facilitates formation and release of the tetramic acid product. Because apdA lacks a designated enoylreductase (ER) domain, the required activity is provided the enoyl reductase apdC. ApdC appears to operate with different stereoselectivity in different PKS cycle. Combined with apdC, apdA is proposed to synthesize preaspyridone A via about 20 enzymatic steps. A number of oxidative steps performed successively by the cytochrome P450 monooxygenases apdE and apdB are required for the conversion of preaspyridone A to aspyridone A. The cytochrome P450 monooxygenase apdE is responsible for the oxidative dephenylation of preaspyridone A. Finally, the predicted FAD-dependent monooxygenase apdD and the acyl-CoA dehydrogenase apdG may be involved in the transformation of aspyridone A into aspyridone B. This Emericella nidulans (strain FGSC A4 / ATCC 38163 / CBS 112.46 / NRRL 194 / M139) (Aspergillus nidulans) protein is FAD-dependent monooxygenase apdD.